The primary structure comprises 336 residues: Holliday junction branch migration complex subunit RuvB (336 aa).

The segment at 1-183 (MATERLVAGN…FGINSRLEFY (183 aa)) is large ATPase domain (RuvB-L). ATP-binding positions include L22, R23, G64, K67, T68, T69, 130–132 (EDF), R173, Y183, and R220. Position 68 (T68) interacts with Mg(2+). The segment at 184 to 254 (QVAELEEIIR…VAREALELLQ (71 aa)) is small ATPAse domain (RuvB-S). Residues 257 to 336 (AAGLDSSDRR…LGIKPEDRLF (80 aa)) are head domain (RuvB-H). Positions 312 and 317 each coordinate DNA.

Belongs to the RuvB family. As to quaternary structure, homohexamer. Forms an RuvA(8)-RuvB(12)-Holliday junction (HJ) complex. HJ DNA is sandwiched between 2 RuvA tetramers; dsDNA enters through RuvA and exits via RuvB. An RuvB hexamer assembles on each DNA strand where it exits the tetramer. Each RuvB hexamer is contacted by two RuvA subunits (via domain III) on 2 adjacent RuvB subunits; this complex drives branch migration. In the full resolvosome a probable DNA-RuvA(4)-RuvB(12)-RuvC(2) complex forms which resolves the HJ.

The protein localises to the cytoplasm. The catalysed reaction is ATP + H2O = ADP + phosphate + H(+). Its function is as follows. The RuvA-RuvB-RuvC complex processes Holliday junction (HJ) DNA during genetic recombination and DNA repair, while the RuvA-RuvB complex plays an important role in the rescue of blocked DNA replication forks via replication fork reversal (RFR). RuvA specifically binds to HJ cruciform DNA, conferring on it an open structure. The RuvB hexamer acts as an ATP-dependent pump, pulling dsDNA into and through the RuvAB complex. RuvB forms 2 homohexamers on either side of HJ DNA bound by 1 or 2 RuvA tetramers; 4 subunits per hexamer contact DNA at a time. Coordinated motions by a converter formed by DNA-disengaged RuvB subunits stimulates ATP hydrolysis and nucleotide exchange. Immobilization of the converter enables RuvB to convert the ATP-contained energy into a lever motion, pulling 2 nucleotides of DNA out of the RuvA tetramer per ATP hydrolyzed, thus driving DNA branch migration. The RuvB motors rotate together with the DNA substrate, which together with the progressing nucleotide cycle form the mechanistic basis for DNA recombination by continuous HJ branch migration. Branch migration allows RuvC to scan DNA until it finds its consensus sequence, where it cleaves and resolves cruciform DNA. In Moorella thermoacetica (strain ATCC 39073 / JCM 9320), this protein is Holliday junction branch migration complex subunit RuvB.